Here is a 200-residue protein sequence, read N- to C-terminus: Large ribosomal subunit protein uL4 (200 aa).

The segment at 44 to 70 (AQKTRAEVTGSGKKPWRQKGTGRARSG) is disordered.

The protein belongs to the universal ribosomal protein uL4 family. Part of the 50S ribosomal subunit.

One of the primary rRNA binding proteins, this protein initially binds near the 5'-end of the 23S rRNA. It is important during the early stages of 50S assembly. It makes multiple contacts with different domains of the 23S rRNA in the assembled 50S subunit and ribosome. Its function is as follows. Protein L4 is a both a transcriptional repressor and a translational repressor protein. It regulates transcription of the S10 operon (to which L4 belongs) by causing premature termination of transcription within the S10 leader. L4 controls the translation of the S10 operon by binding to its mRNA. Functionally, this protein when expressed in E.coli represses both transcription and translation of the endogenous S10 operon. As the M.morganii S10 leader can be regulated in vitro by the E.coli L4 protein this strongly suggests the endogenous protein controls its own S10 operon in a similar fashion. In terms of biological role, forms part of the polypeptide exit tunnel. This chain is Large ribosomal subunit protein uL4 (rplD), found in Morganella morganii (Proteus morganii).